Reading from the N-terminus, the 1071-residue chain is Carbamoyl phosphate synthase large chain (1071 aa).

The carboxyphosphate synthetic domain stretch occupies residues 1-399 (MPKREDIKKV…SLLKAFKSLD (399 aa)). ATP-binding residues include R129, R169, G175, G176, E208, V210, E215, G241, V242, H243, Q284, and E296. An ATP-grasp 1 domain is found at 133-325 (KETMLRIGEK…IARVTAKIAI (193 aa)). Residues Q284, E296, and N298 each contribute to the Mg(2+) site. Mn(2+) contacts are provided by Q284, E296, and N298. Residues 400 to 540 (IDNQLGNKHW…YSTYEDSCET (141 aa)) form an oligomerization domain region. Residues 541–932 (NATTDKKKIL…YKAELAADNV (392 aa)) form a carbamoyl phosphate synthetic domain region. In terms of domain architecture, ATP-grasp 2 spans 673-864 (YILMKELGVP…LAKIAAKVIA (192 aa)). Residues R709, D748, L750, E755, G780, V781, H782, S783, Q823, and E835 each coordinate ATP. 3 residues coordinate Mg(2+): Q823, E835, and N837. 3 residues coordinate Mn(2+): Q823, E835, and N837. Residues 931–1071 (NVLPLTGKVF…INEYHKEMEN (141 aa)) enclose the MGS-like domain. The tract at residues 933–1071 (LPLTGKVFLS…INEYHKEMEN (139 aa)) is allosteric domain.

This sequence belongs to the CarB family. In terms of assembly, composed of two chains; the small (or glutamine) chain promotes the hydrolysis of glutamine to ammonia, which is used by the large (or ammonia) chain to synthesize carbamoyl phosphate. Tetramer of heterodimers (alpha,beta)4. It depends on Mg(2+) as a cofactor. Mn(2+) serves as cofactor.

It carries out the reaction hydrogencarbonate + L-glutamine + 2 ATP + H2O = carbamoyl phosphate + L-glutamate + 2 ADP + phosphate + 2 H(+). The enzyme catalyses hydrogencarbonate + NH4(+) + 2 ATP = carbamoyl phosphate + 2 ADP + phosphate + 2 H(+). It participates in amino-acid biosynthesis; L-arginine biosynthesis; carbamoyl phosphate from bicarbonate: step 1/1. It functions in the pathway pyrimidine metabolism; UMP biosynthesis via de novo pathway; (S)-dihydroorotate from bicarbonate: step 1/3. Its function is as follows. Large subunit of the glutamine-dependent carbamoyl phosphate synthetase (CPSase). CPSase catalyzes the formation of carbamoyl phosphate from the ammonia moiety of glutamine, carbonate, and phosphate donated by ATP, constituting the first step of 2 biosynthetic pathways, one leading to arginine and/or urea and the other to pyrimidine nucleotides. The large subunit (synthetase) binds the substrates ammonia (free or transferred from glutamine from the small subunit), hydrogencarbonate and ATP and carries out an ATP-coupled ligase reaction, activating hydrogencarbonate by forming carboxy phosphate which reacts with ammonia to form carbamoyl phosphate. The chain is Carbamoyl phosphate synthase large chain from Methanosarcina barkeri (strain Fusaro / DSM 804).